Consider the following 517-residue polypeptide: MSRSESPRPLLEMRGISKTFPAVRALDNVSLTVYPGEIHSLMGENGAGKSTLMKILSGAYRADAGGEILIDGQRIEIDGPLAARDAGVAVIYQELCLSPNLTVAENIYVGRELRRGNRRWGTIDRAAMARGCQDVLARLGAPFGPDTLVDTLSIAEQQLVEIARAVHTRARILVMDEPTTPLSSRETEHLFRLIRQLREEGLAIIYISHRMAEIYELSDRVSVLRDGAYVGTLERASLSAERLVAMMVGRDISGFYKKEHAPYDPGHLLLSVRDIADGTRVRGCSLDLHAGEVLGIAGLVGAGRTELARLIFGAEPRVRGDVKLGERTFGAHSPRDAIDAGLVYLTEDRKRQGLFLDMSVRDNINISVCNRDARLGALDLARGAERARDAIASLSIRVPHANVNVGALSGGNQQKVLLSRLLETKPRVLILDEPTRGVDIGAKSEIYRIINELARAGVGVIVISSELPEIIGVADRVLVMREGEIAGELGGHTHTPITQEAIIALATGSQAELADAH.

ABC transporter domains follow at residues 11 to 251 and 263 to 507; these read LEMR…VGRD and YDPG…ALAT. 43-50 is a binding site for ATP; that stretch reads GENGAGKS.

Belongs to the ABC transporter superfamily. Ribose importer (TC 3.A.1.2.1) family. In terms of assembly, the complex is composed of an ATP-binding protein (RbsA), two transmembrane proteins (RbsC) and a solute-binding protein (RbsB).

The protein localises to the cell inner membrane. The catalysed reaction is D-ribose(out) + ATP + H2O = D-ribose(in) + ADP + phosphate + H(+). Part of the ABC transporter complex RbsABC involved in ribose import. Responsible for energy coupling to the transport system. The sequence is that of Ribose import ATP-binding protein RbsA 1 from Burkholderia cenocepacia (strain HI2424).